Here is a 341-residue protein sequence, read N- to C-terminus: tRNA-specific 2-thiouridylase MnmA (341 aa).

ATP-binding positions include 8 to 15 (GMSGGVDS) and M34. C94 serves as the catalytic Nucleophile. An intrachain disulfide couples C94 to C188. G118 serves as a coordination point for ATP. Residues 136–138 (KDQ) form an interaction with tRNA region. The active-site Cysteine persulfide intermediate is C188. Residues 290–291 (RY) are interaction with tRNA.

It belongs to the MnmA/TRMU family.

Its subcellular location is the cytoplasm. The catalysed reaction is S-sulfanyl-L-cysteinyl-[protein] + uridine(34) in tRNA + AH2 + ATP = 2-thiouridine(34) in tRNA + L-cysteinyl-[protein] + A + AMP + diphosphate + H(+). In terms of biological role, catalyzes the 2-thiolation of uridine at the wobble position (U34) of tRNA, leading to the formation of s(2)U34. This Sulfurimonas denitrificans (strain ATCC 33889 / DSM 1251) (Thiomicrospira denitrificans (strain ATCC 33889 / DSM 1251)) protein is tRNA-specific 2-thiouridylase MnmA.